The chain runs to 472 residues: MSLSRRRFIQASGLALCAGGLPLQARASGAQAVLPVPPLLESRRGQPLFLSLERTHWAFMGGRKVGTWGVNGVYLGPTVRVHSGDDVKLIYSNRLSESVAMEVAGLLVPGPLAGGPARQMSPGVDWSPVLPIRQAAATLWYHADTPRHMAPQVYSGLAGLWLVEDQYSKNAPLPNHYGVDDFPLILQDKRLDNFGVPEYDPPSSGGFLGDTLLVNGVQDPYVEVSRGWVRLRLLNASNARRYLLQLSDGRPFFVIASDQGLLPAPLQADTLPLAPGERREVLIDMSKGEEISITAGEAAGIMDRLRGLFEPSSMLVSTRVLTLRPTGLLPLMTDTLPARLAADPLPEGDVVNNRSIMLGSASSPGINGALWDPGRIDVQARQGTWERWTVRADTPQSFYIQGAQFLVKSVNNAPPLVEDRGWKDSVWVDGEVSLLVYFPQPSSEHFPFLFYSGTLELADRGSVGQMVVQPAQ.

Positions 1–32 (MSLSRRRFIQASGLALCAGGLPLQARASGAQA) form a signal peptide, tat-type signal.

Belongs to the FtsP family. Predicted to be exported by the Tat system. The position of the signal peptide cleavage has not been experimentally proven.

It is found in the periplasm. In terms of biological role, cell division protein that is required for growth during stress conditions. May be involved in protecting or stabilizing the divisomal assembly under conditions of stress. The protein is Cell division protein FtsP of Edwardsiella tarda (strain FL6-60).